A 223-amino-acid chain; its full sequence is Deoxyribose-phosphate aldolase 1 (223 aa).

Residue Asp-91 is the Proton donor/acceptor of the active site. Catalysis depends on Lys-153, which acts as the Schiff-base intermediate with acetaldehyde. Lys-182 (proton donor/acceptor) is an active-site residue.

This sequence belongs to the DeoC/FbaB aldolase family. DeoC type 1 subfamily.

The protein resides in the cytoplasm. The catalysed reaction is 2-deoxy-D-ribose 5-phosphate = D-glyceraldehyde 3-phosphate + acetaldehyde. Its pathway is carbohydrate degradation; 2-deoxy-D-ribose 1-phosphate degradation; D-glyceraldehyde 3-phosphate and acetaldehyde from 2-deoxy-alpha-D-ribose 1-phosphate: step 2/2. Functionally, catalyzes a reversible aldol reaction between acetaldehyde and D-glyceraldehyde 3-phosphate to generate 2-deoxy-D-ribose 5-phosphate. The protein is Deoxyribose-phosphate aldolase 1 of Yersinia pestis.